A 235-amino-acid polypeptide reads, in one-letter code: UPF0749 protein YlxX (235 aa).

Residues 6-26 (SFISISVLMVIFGLMISVQFN) form a helical membrane-spanning segment.

The protein belongs to the UPF0749 family.

Its subcellular location is the cell membrane. This chain is UPF0749 protein YlxX (ylxX), found in Bacillus subtilis (strain 168).